The sequence spans 217 residues: Probable GTP-binding protein EngB (217 aa).

One can recognise an EngB-type G domain in the interval 27 to 201 (TGIEVAFAGR…RDKLDTWFSE (175 aa)). Residues 35–42 (GRSNAGKS), 62–66 (GRTQL), 80–83 (DLPG), 147–150 (TKAD), and 180–182 (FSS) contribute to the GTP site. 2 residues coordinate Mg(2+): serine 42 and threonine 64.

It belongs to the TRAFAC class TrmE-Era-EngA-EngB-Septin-like GTPase superfamily. EngB GTPase family. Mg(2+) serves as cofactor.

Functionally, necessary for normal cell division and for the maintenance of normal septation. This chain is Probable GTP-binding protein EngB, found in Edwardsiella ictaluri (strain 93-146).